A 221-amino-acid polypeptide reads, in one-letter code: Jacalin-related lectin 47 (221 aa).

Jacalin-type lectin domains are found at residues methionine 1–proline 64 and serine 71–proline 217.

This sequence belongs to the jacalin lectin family.

The protein is Jacalin-related lectin 47 (JAL47) of Arabidopsis thaliana (Mouse-ear cress).